A 984-amino-acid chain; its full sequence is Detocs histidine-protein kinase DtcA (984 aa).

His645 carries the post-translational modification Phosphohistidine; by autocatalysis.

In terms of processing, autophosphorylated.

It carries out the reaction ATP + protein L-histidine = ADP + protein N-phospho-L-histidine.. Functionally, sensor-kinase member of the two-component regulatory system Detocs that confers resistance to bacteriophage. When the system (DtcA-DtcB-DtcC) is expressed in a susceptible E.coli (strain MG1655) it confers resistance to bacteriophages T2, T4, T5, T6 and SECphi27. Detocs inhibits T5 infection leading to growth arrest but not complete cell lysis, during SECphi27 infection leads to cell lysis. DtcA (this subunit) probably autophosphorylates upon sensing viral infection, and subsequently transfers the phosphate signal to DtcC which activates it, leading to an antiviral defense; DtcB may scavenge phosphorylation signals from accidental activation of DtcA. The chain is Detocs histidine-protein kinase DtcA from Vibrio alginolyticus.